We begin with the raw amino-acid sequence, 222 residues long: UPF0758 protein YicR (222 aa).

The MPN domain occupies 100–222 (PLLSPEMTRE…YVSFAERGWI (123 aa)). The Zn(2+) site is built by His-171, His-173, and Asp-184. Residues 171–184 (HNHPSGCAEPSKAD) carry the JAMM motif motif.

This sequence belongs to the UPF0758 family. YicR subfamily.

This Shigella dysenteriae serotype 1 (strain Sd197) protein is UPF0758 protein YicR.